The sequence spans 569 residues: Glutamine--tRNA ligase (569 aa).

Residues 1–23 (MSKDPMSKPTPEPAAHSKAGPAV) are disordered. Positions 50-60 (PEPNGYLHIGH) match the 'HIGH' region motif. Residues 51–53 (EPN) and 57–63 (HIGHAKS) each bind ATP. Residues D83 and Y228 each contribute to the L-glutamine site. ATP-binding positions include T247 and 277-278 (RL). A 'KMSKS' region motif is present at residues 284–288 (ITSKR).

This sequence belongs to the class-I aminoacyl-tRNA synthetase family. In terms of assembly, monomer.

The protein localises to the cytoplasm. The catalysed reaction is tRNA(Gln) + L-glutamine + ATP = L-glutaminyl-tRNA(Gln) + AMP + diphosphate. The polypeptide is Glutamine--tRNA ligase (Pseudomonas syringae pv. tomato (strain ATCC BAA-871 / DC3000)).